A 217-amino-acid polypeptide reads, in one-letter code: 3,4-dihydroxy-2-butanone 4-phosphate synthase (217 aa).

Residues 37 to 38 (RE), aspartate 42, 150 to 154 (RRGHT), and glutamate 174 contribute to the D-ribulose 5-phosphate site. Mg(2+) is bound at residue glutamate 38. Histidine 153 serves as a coordination point for Mg(2+).

This sequence belongs to the DHBP synthase family. In terms of assembly, homodimer. Mg(2+) serves as cofactor. It depends on Mn(2+) as a cofactor.

The catalysed reaction is D-ribulose 5-phosphate = (2S)-2-hydroxy-3-oxobutyl phosphate + formate + H(+). The protein operates within cofactor biosynthesis; riboflavin biosynthesis; 2-hydroxy-3-oxobutyl phosphate from D-ribulose 5-phosphate: step 1/1. Its function is as follows. Catalyzes the conversion of D-ribulose 5-phosphate to formate and 3,4-dihydroxy-2-butanone 4-phosphate. This chain is 3,4-dihydroxy-2-butanone 4-phosphate synthase, found in Shewanella oneidensis (strain ATCC 700550 / JCM 31522 / CIP 106686 / LMG 19005 / NCIMB 14063 / MR-1).